Reading from the N-terminus, the 750-residue chain is Photosystem I P700 chlorophyll a apoprotein A1 (750 aa).

A run of 8 helical transmembrane segments spans residues 70–93 (VFSA…FHGA), 156–179 (LYST…FHYH), 195–219 (LNHH…HVSL), 291–309 (TAHH…GHMY), 346–369 (WHAQ…HHMY), 385–411 (LSLF…IFMV), 433–455 (AIIS…LYIH), and 531–549 (FLVH…LILL). Residues Cys573 and Cys582 each coordinate [4Fe-4S] cluster. 2 helical membrane-spanning segments follow: residues 589-610 (HVFL…HFSW) and 664-686 (LSAY…MFLF). Residue His675 coordinates chlorophyll a'. The chlorophyll a site is built by Met683 and Tyr691. Trp692 contributes to the phylloquinone binding site. A helical membrane pass occupies residues 724-744 (AVGVAHYLLGGIATTWAFFLA).

Belongs to the PsaA/PsaB family. As to quaternary structure, the PsaA/B heterodimer binds the P700 chlorophyll special pair and subsequent electron acceptors. PSI consists of a core antenna complex that captures photons, and an electron transfer chain that converts photonic excitation into a charge separation. The eukaryotic PSI reaction center is composed of at least 11 subunits. P700 is a chlorophyll a/chlorophyll a' dimer, A0 is one or more chlorophyll a, A1 is one or both phylloquinones and FX is a shared 4Fe-4S iron-sulfur center. is required as a cofactor.

The protein resides in the plastid. Its subcellular location is the chloroplast thylakoid membrane. It catalyses the reaction reduced [plastocyanin] + hnu + oxidized [2Fe-2S]-[ferredoxin] = oxidized [plastocyanin] + reduced [2Fe-2S]-[ferredoxin]. In terms of biological role, psaA and PsaB bind P700, the primary electron donor of photosystem I (PSI), as well as the electron acceptors A0, A1 and FX. PSI is a plastocyanin-ferredoxin oxidoreductase, converting photonic excitation into a charge separation, which transfers an electron from the donor P700 chlorophyll pair to the spectroscopically characterized acceptors A0, A1, FX, FA and FB in turn. Oxidized P700 is reduced on the lumenal side of the thylakoid membrane by plastocyanin. The protein is Photosystem I P700 chlorophyll a apoprotein A1 of Anthoceros angustus (Hornwort).